A 300-amino-acid polypeptide reads, in one-letter code: Ribonuclease HIII (300 aa).

Residues 83-300 enclose the RNase H type-2 domain; that stretch reads IPIIGSDEVG…THKAQALLTK (218 aa). Positions 89, 90, and 194 each coordinate a divalent metal cation.

Belongs to the RNase HII family. RnhC subfamily. Mn(2+) serves as cofactor. Mg(2+) is required as a cofactor.

Its subcellular location is the cytoplasm. The catalysed reaction is Endonucleolytic cleavage to 5'-phosphomonoester.. Its function is as follows. Endonuclease that specifically degrades the RNA of RNA-DNA hybrids. The sequence is that of Ribonuclease HIII from Streptococcus pyogenes serotype M12 (strain MGAS2096).